The primary structure comprises 269 residues: MAAEGEAKKDSASNPPGGGGGGGGGEEEEDSSLAVGEAAVGVGEAGGGGGGGEKADREEEEGKEDVEEGGVCKDLVLVEDAVPVEDPEEAAATAALQEEMKALVESVPVGAGAAFTAMQLQELEQQSRVYQYMAARVPVPTHLVFPIWKSVTGASSEGAQKYPTLMGLATLCLDFGKNPEPEPGRCRRTDGKKWRCWRNAIANEKYCERHMHRGRKRPVQLVVEDDEPDSTSGSKPASGKATEGGKKTDDKSSSSKKLAVAAPAAVEST.

Residues 1–11 (MAAEGEAKKDS) show a composition bias toward basic and acidic residues. Positions 1–71 (MAAEGEAKKD…GKEDVEEGGV (71 aa)) are disordered. Residues 43–52 (GEAGGGGGGG) are compositionally biased toward gly residues. Positions 58 to 68 (EEEEGKEDVEE) are enriched in acidic residues. Residues 114 to 149 (AFTAMQLQELEQQSRVYQYMAARVPVPTHLVFPIWK) enclose the QLQ domain. Residues 180 to 224 (EPEPGRCRRTDGKKWRCWRNAIANEKYCERHMHRGRKRPVQLVVE) enclose the WRC domain. 2 short sequence motifs (bipartite nuclear localization signal) span residues 185-195 (RCRRTDGKKWR) and 213-217 (RGRKR). Residues 212–269 (HRGRKRPVQLVVEDDEPDSTSGSKPASGKATEGGKKTDDKSSSSKKLAVAAPAAVEST) form a disordered region. The segment covering 243 to 253 (EGGKKTDDKSS) has biased composition (basic and acidic residues). A compositionally biased stretch (low complexity) spans 255-269 (SKKLAVAAPAAVEST).

It belongs to the GRF family.

It localises to the nucleus. In terms of biological role, transcription activator that plays a regulatory role in gibberellin-induced stem elongation. The sequence is that of Growth-regulating factor 11 (GRF11) from Oryza sativa subsp. japonica (Rice).